A 159-amino-acid polypeptide reads, in one-letter code: Large ribosomal subunit protein uL11 (159 aa).

Over residues 137–149 (EGKDPREVQREVD) the composition is skewed to basic and acidic residues. Residues 137 to 159 (EGKDPREVQREVDSGAWDKLLGG) form a disordered region.

Belongs to the universal ribosomal protein uL11 family. In terms of assembly, part of the ribosomal stalk of the 50S ribosomal subunit. Interacts with L10 and the large rRNA to form the base of the stalk. L10 forms an elongated spine to which L12 dimers bind in a sequential fashion forming a multimeric L10(L12)X complex.

Its function is as follows. Forms part of the ribosomal stalk which helps the ribosome interact with GTP-bound translation factors. The protein is Large ribosomal subunit protein uL11 of Korarchaeum cryptofilum (strain OPF8).